The following is a 220-amino-acid chain: NADH-quinone oxidoreductase subunit I (220 aa).

4Fe-4S ferredoxin-type domains are found at residues 71–102 (LQRLLDSGSERCIGCGLCEKICTSNCIRIITH) and 112–141 (DSYTINLGRCIYCGLCAEVCPELAIVMGNR). Cys82, Cys85, Cys88, Cys92, Cys121, Cys124, Cys127, and Cys131 together coordinate [4Fe-4S] cluster. The interval 187 to 220 (MQATPLDYVQEPSKEESKEETPTNPESNKGDENV) is disordered. Residues 198–207 (PSKEESKEET) show a composition bias toward basic and acidic residues.

This sequence belongs to the complex I 23 kDa subunit family. In terms of assembly, NDH-1 is composed of 14 different subunits. Subunits NuoA, H, J, K, L, M, N constitute the membrane sector of the complex. [4Fe-4S] cluster serves as cofactor.

The protein localises to the cell inner membrane. The catalysed reaction is a quinone + NADH + 5 H(+)(in) = a quinol + NAD(+) + 4 H(+)(out). Functionally, NDH-1 shuttles electrons from NADH, via FMN and iron-sulfur (Fe-S) centers, to quinones in the respiratory chain. The immediate electron acceptor for the enzyme in this species is believed to be ubiquinone. Couples the redox reaction to proton translocation (for every two electrons transferred, four hydrogen ions are translocated across the cytoplasmic membrane), and thus conserves the redox energy in a proton gradient. This chain is NADH-quinone oxidoreductase subunit I, found in Helicobacter pylori (strain HPAG1).